The sequence spans 285 residues: MTVTDHREAMIEARAAVTDVREAMDAYAEEFAADVNSIRTDSRHRENIRDMRAAVDAYCESFATAVSTHHDETAALRADLEATAAAFDAYTTAFAADAAAMHDVSALHRDIEALREEFRAVTTDFEDYTTDEFAPAVGALHADAAETAASFTAKQEGFEAYRHDVHESAVPALTADIAATRADFDDTAASFAAYARAFYGHTDDATAQTDADDTTAQTDVLSGQATVTRAQPEEDDTPEDMVQCRVCEEYYQAITEPHLQTHEMTIDGYRDEYGEDVPLRPDDHA.

A run of 6 repeats spans residues 22–52 (EAMD…RDMR), 53–84 (AAVD…EATA), 85–122 (AAFD…RAVT), 123–155 (TDFE…TAKQ), 156–188 (EGFE…DDTA), and 189–220 (ASFA…QTDV). Residues 22-220 (EAMDAYAEEF…ADDTTAQTDV (199 aa)) are 6 X approximate tandem repeats.

The protein belongs to the halobacterial gas vesicle GvpC family.

Its subcellular location is the gas vesicle. In terms of biological role, confers stability, involved in shaping gas vesicles (GV), hollow, gas filled proteinaceous nanostructures. GVs allow positioning of halobacteria at an optimal depth for growth in the poorly aerated, shallow brine pools of their habitat. Functionally, expression of 2 c-vac DNA fragments containing 2 divergently transcribed regions (gvpE-gvpF-gvpG-gvpH-gvpI-gvpJ-gvpK-gvpL-gvpM and gvpA-gvpC-gvpN-gvpO) allows H.volcanii to produce gas vesicles. This is Gas vesicle protein C2 from Halobacterium salinarum (strain ATCC 700922 / JCM 11081 / NRC-1) (Halobacterium halobium).